The chain runs to 100 residues: Large ribosomal subunit protein uL23 (100 aa).

This sequence belongs to the universal ribosomal protein uL23 family. As to quaternary structure, part of the 50S ribosomal subunit. Contacts protein L29, and trigger factor when it is bound to the ribosome.

One of the early assembly proteins it binds 23S rRNA. One of the proteins that surrounds the polypeptide exit tunnel on the outside of the ribosome. Forms the main docking site for trigger factor binding to the ribosome. This Proteus mirabilis (strain HI4320) protein is Large ribosomal subunit protein uL23.